A 154-amino-acid polypeptide reads, in one-letter code: Transcriptional repressor NrdR (154 aa).

A zinc finger spans residues 3-34 (CPFCRHPDSRVIDSRETDEGQAIRRRRSCPEC). The 91-residue stretch at 46–136 (LAVVKRSGVT…VYRSFSSADD (91 aa)) folds into the ATP-cone domain.

This sequence belongs to the NrdR family. Zn(2+) is required as a cofactor.

Functionally, negatively regulates transcription of bacterial ribonucleotide reductase nrd genes and operons by binding to NrdR-boxes. In Mycobacterium bovis (strain ATCC BAA-935 / AF2122/97), this protein is Transcriptional repressor NrdR.